The sequence spans 274 residues: 2,3,4,5-tetrahydropyridine-2,6-dicarboxylate N-succinyltransferase (274 aa).

Substrate is bound by residues R104 and D141.

It belongs to the transferase hexapeptide repeat family. In terms of assembly, homotrimer.

It is found in the cytoplasm. It carries out the reaction (S)-2,3,4,5-tetrahydrodipicolinate + succinyl-CoA + H2O = (S)-2-succinylamino-6-oxoheptanedioate + CoA. It participates in amino-acid biosynthesis; L-lysine biosynthesis via DAP pathway; LL-2,6-diaminopimelate from (S)-tetrahydrodipicolinate (succinylase route): step 1/3. This Shewanella halifaxensis (strain HAW-EB4) protein is 2,3,4,5-tetrahydropyridine-2,6-dicarboxylate N-succinyltransferase.